The following is a 621-amino-acid chain: Bifunctional protein GlmU (621 aa).

A pyrophosphorylase region spans residues 1-229; that stretch reads MAERDLAVAI…AREIVGINDR (229 aa). UDP-N-acetyl-alpha-D-glucosamine contacts are provided by residues 11 to 14, lysine 25, glutamine 76, and 81 to 82; these read LAAG and GT. Aspartate 106 serves as a coordination point for Mg(2+). Residues glycine 143, glutamate 158, asparagine 173, and asparagine 227 each coordinate UDP-N-acetyl-alpha-D-glucosamine. Asparagine 227 contributes to the Mg(2+) binding site. Residues 230–250 are linker; sequence RQLAQAYQILQDRLKEAWMEA. Residues 251–621 are N-acetyltransferase; the sequence is GVTFVDPDSV…TGVGIPSCPP (371 aa). Residues arginine 332 and lysine 350 each coordinate UDP-N-acetyl-alpha-D-glucosamine. Histidine 362 (proton acceptor) is an active-site residue. Residues tyrosine 365 and asparagine 376 each contribute to the UDP-N-acetyl-alpha-D-glucosamine site. Acetyl-CoA contacts are provided by residues alanine 379, 385-386, alanine 422, and arginine 441; that span reads NY. The segment at 601–621 is disordered; sequence ATPPSPQRADGTGVGIPSCPP.

The protein in the N-terminal section; belongs to the N-acetylglucosamine-1-phosphate uridyltransferase family. It in the C-terminal section; belongs to the transferase hexapeptide repeat family. In terms of assembly, homotrimer. Mg(2+) is required as a cofactor.

The protein resides in the cytoplasm. It catalyses the reaction alpha-D-glucosamine 1-phosphate + acetyl-CoA = N-acetyl-alpha-D-glucosamine 1-phosphate + CoA + H(+). It carries out the reaction N-acetyl-alpha-D-glucosamine 1-phosphate + UTP + H(+) = UDP-N-acetyl-alpha-D-glucosamine + diphosphate. It participates in nucleotide-sugar biosynthesis; UDP-N-acetyl-alpha-D-glucosamine biosynthesis; N-acetyl-alpha-D-glucosamine 1-phosphate from alpha-D-glucosamine 6-phosphate (route II): step 2/2. It functions in the pathway nucleotide-sugar biosynthesis; UDP-N-acetyl-alpha-D-glucosamine biosynthesis; UDP-N-acetyl-alpha-D-glucosamine from N-acetyl-alpha-D-glucosamine 1-phosphate: step 1/1. Its pathway is bacterial outer membrane biogenesis; LPS lipid A biosynthesis. Its function is as follows. Catalyzes the last two sequential reactions in the de novo biosynthetic pathway for UDP-N-acetylglucosamine (UDP-GlcNAc). The C-terminal domain catalyzes the transfer of acetyl group from acetyl coenzyme A to glucosamine-1-phosphate (GlcN-1-P) to produce N-acetylglucosamine-1-phosphate (GlcNAc-1-P), which is converted into UDP-GlcNAc by the transfer of uridine 5-monophosphate (from uridine 5-triphosphate), a reaction catalyzed by the N-terminal domain. The polypeptide is Bifunctional protein GlmU (Synechococcus sp. (strain JA-3-3Ab) (Cyanobacteria bacterium Yellowstone A-Prime)).